The primary structure comprises 230 residues: Octanoyltransferase (230 aa).

Positions 40 to 218 (PSLDDVLILL…CFAEVFGVEL (179 aa)) constitute a BPL/LPL catalytic domain. Substrate-binding positions include 82–89 (RGGEVTYH), 149–151 (AIG), and 162–164 (GFA). The Acyl-thioester intermediate role is filled by Cys180.

It belongs to the LipB family.

It is found in the cytoplasm. It carries out the reaction octanoyl-[ACP] + L-lysyl-[protein] = N(6)-octanoyl-L-lysyl-[protein] + holo-[ACP] + H(+). The protein operates within protein modification; protein lipoylation via endogenous pathway; protein N(6)-(lipoyl)lysine from octanoyl-[acyl-carrier-protein]: step 1/2. Its function is as follows. Catalyzes the transfer of endogenously produced octanoic acid from octanoyl-acyl-carrier-protein onto the lipoyl domains of lipoate-dependent enzymes. Lipoyl-ACP can also act as a substrate although octanoyl-ACP is likely to be the physiological substrate. The sequence is that of Octanoyltransferase from Nostoc punctiforme (strain ATCC 29133 / PCC 73102).